We begin with the raw amino-acid sequence, 256 residues long: Homeobox-leucine zipper protein HOX28 (256 aa).

Residues 56 to 86 (ACSPGSPVSSGSGKRGSGSGSGDEVDDAGCD) are disordered. Residues 58-67 (SPGSPVSSGS) show a composition bias toward low complexity. The homeobox DNA-binding region spans 91–150 (GARKKLRLSKDQAAVLEECFKTHHTLTPKQKVALAKSLNLRPRQVEVWFQNRRARTKLKQ). A leucine-zipper region spans residues 149–193 (KQTEVDCEHLKRWCDQLADDNRRLHKELAELRALKATPTPPAAAP).

The protein belongs to the HD-ZIP homeobox family. Class II subfamily. In terms of tissue distribution, expressed in seedlings, roots, stems and panicles.

The protein localises to the nucleus. Probable transcription factor. This chain is Homeobox-leucine zipper protein HOX28 (HOX28), found in Oryza sativa subsp. indica (Rice).